Here is a 338-residue protein sequence, read N- to C-terminus: Anthranilate phosphoribosyltransferase (338 aa).

5-phospho-alpha-D-ribose 1-diphosphate-binding positions include Gly-78, 81 to 82 (GD), Ser-86, 88 to 91 (NIST), 106 to 114 (KHGNKSITS), and Ser-118. Gly-78 contacts anthranilate. Ser-90 serves as a coordination point for Mg(2+). Asn-109 contributes to the anthranilate binding site. Arg-163 lines the anthranilate pocket. Positions 222 and 223 each coordinate Mg(2+).

This sequence belongs to the anthranilate phosphoribosyltransferase family. Homodimer. Requires Mg(2+) as cofactor.

It carries out the reaction N-(5-phospho-beta-D-ribosyl)anthranilate + diphosphate = 5-phospho-alpha-D-ribose 1-diphosphate + anthranilate. It participates in amino-acid biosynthesis; L-tryptophan biosynthesis; L-tryptophan from chorismate: step 2/5. Catalyzes the transfer of the phosphoribosyl group of 5-phosphorylribose-1-pyrophosphate (PRPP) to anthranilate to yield N-(5'-phosphoribosyl)-anthranilate (PRA). This is Anthranilate phosphoribosyltransferase from Staphylococcus carnosus (strain TM300).